A 170-amino-acid chain; its full sequence is Ribosome maturation factor RimM (170 aa).

In terms of domain architecture, PRC barrel spans lysine 97 to phenylalanine 170.

It belongs to the RimM family. As to quaternary structure, binds ribosomal protein uS19.

It is found in the cytoplasm. Its function is as follows. An accessory protein needed during the final step in the assembly of 30S ribosomal subunit, possibly for assembly of the head region. Essential for efficient processing of 16S rRNA. May be needed both before and after RbfA during the maturation of 16S rRNA. It has affinity for free ribosomal 30S subunits but not for 70S ribosomes. In Stenotrophomonas maltophilia (strain K279a), this protein is Ribosome maturation factor RimM.